Consider the following 363-residue polypeptide: Phosphoserine aminotransferase (363 aa).

L-glutamate is bound at residue Arg-42. Residues Gly-76 to Arg-77, Trp-102, Thr-156, Asp-175, and Gln-198 each bind pyridoxal 5'-phosphate. Residue Lys-199 is modified to N6-(pyridoxal phosphate)lysine. Residue Asn-240–Thr-241 participates in pyridoxal 5'-phosphate binding.

It belongs to the class-V pyridoxal-phosphate-dependent aminotransferase family. SerC subfamily. As to quaternary structure, homodimer. Requires pyridoxal 5'-phosphate as cofactor.

The protein resides in the cytoplasm. The catalysed reaction is O-phospho-L-serine + 2-oxoglutarate = 3-phosphooxypyruvate + L-glutamate. It carries out the reaction 4-(phosphooxy)-L-threonine + 2-oxoglutarate = (R)-3-hydroxy-2-oxo-4-phosphooxybutanoate + L-glutamate. It participates in amino-acid biosynthesis; L-serine biosynthesis; L-serine from 3-phospho-D-glycerate: step 2/3. The protein operates within cofactor biosynthesis; pyridoxine 5'-phosphate biosynthesis; pyridoxine 5'-phosphate from D-erythrose 4-phosphate: step 3/5. Catalyzes the reversible conversion of 3-phosphohydroxypyruvate to phosphoserine and of 3-hydroxy-2-oxo-4-phosphonooxybutanoate to phosphohydroxythreonine. In Shewanella baltica (strain OS195), this protein is Phosphoserine aminotransferase.